A 204-amino-acid chain; its full sequence is GTP cyclohydrolase-2 (204 aa).

A GTP-binding site is contributed by 49 to 53 (RIHSE). Cys-54, Cys-65, and Cys-67 together coordinate Zn(2+). Residues Gln-70, 92 to 94 (EGR), and Thr-114 contribute to the GTP site. The active-site Proton acceptor is Asp-126. Catalysis depends on Arg-128, which acts as the Nucleophile. Residues Thr-149 and Lys-154 each coordinate GTP.

The protein belongs to the GTP cyclohydrolase II family. The cofactor is Zn(2+).

The enzyme catalyses GTP + 4 H2O = 2,5-diamino-6-hydroxy-4-(5-phosphoribosylamino)-pyrimidine + formate + 2 phosphate + 3 H(+). The protein operates within cofactor biosynthesis; riboflavin biosynthesis; 5-amino-6-(D-ribitylamino)uracil from GTP: step 1/4. Functionally, catalyzes the conversion of GTP to 2,5-diamino-6-ribosylamino-4(3H)-pyrimidinone 5'-phosphate (DARP), formate and pyrophosphate. The polypeptide is GTP cyclohydrolase-2 (Shewanella baltica (strain OS223)).